The following is a 548-amino-acid chain: Chaperonin GroEL (548 aa).

ATP-binding positions include 30–33 (TLGP), Lys-51, 87–91 (DGTTT), Gly-415, 479–481 (NAA), and Asp-495.

This sequence belongs to the chaperonin (HSP60) family. As to quaternary structure, forms a cylinder of 14 subunits composed of two heptameric rings stacked back-to-back. Interacts with the co-chaperonin GroES.

Its subcellular location is the cytoplasm. It catalyses the reaction ATP + H2O + a folded polypeptide = ADP + phosphate + an unfolded polypeptide.. Its function is as follows. Together with its co-chaperonin GroES, plays an essential role in assisting protein folding. The GroEL-GroES system forms a nano-cage that allows encapsulation of the non-native substrate proteins and provides a physical environment optimized to promote and accelerate protein folding. The polypeptide is Chaperonin GroEL (Salmonella arizonae (strain ATCC BAA-731 / CDC346-86 / RSK2980)).